The chain runs to 181 residues: MGQIHATTIFAVHHNGGCAMAGDGQVTLGNAVVMKGTAKKVRRLFNGQVLAGFAGSVADAFTLFEMFEGKLNEYNGNLQRAAVEVAKQWRGDKMLRQLEAMLLVMDKTTLLLVSGTGEVIEPDDGILAIGSGGNYALSAGRALKKYAGETMTAREIAEAALETAAEICVFTNHNIIVEALS.

Residue T7 is part of the active site. Na(+)-binding residues include A165, C168, and T171.

Belongs to the peptidase T1B family. HslV subfamily. A double ring-shaped homohexamer of HslV is capped on each side by a ring-shaped HslU homohexamer. The assembly of the HslU/HslV complex is dependent on binding of ATP.

It localises to the cytoplasm. It carries out the reaction ATP-dependent cleavage of peptide bonds with broad specificity.. Allosterically activated by HslU binding. Protease subunit of a proteasome-like degradation complex believed to be a general protein degrading machinery. The protein is ATP-dependent protease subunit HslV of Lysinibacillus sphaericus (strain C3-41).